A 342-amino-acid polypeptide reads, in one-letter code: 4-hydroxy-2-oxovalerate aldolase (342 aa).

In terms of domain architecture, Pyruvate carboxyltransferase spans 8–260 (ITVHDMTLRD…ATGVDLFKMQ (253 aa)). 16–17 (RD) lines the substrate pocket. Asp-17 contributes to the Mn(2+) binding site. The active-site Proton acceptor is His-20. Ser-170 and His-199 together coordinate substrate. Mn(2+) contacts are provided by His-199 and His-201. Residue Tyr-290 participates in substrate binding.

It belongs to the 4-hydroxy-2-oxovalerate aldolase family.

The enzyme catalyses (S)-4-hydroxy-2-oxopentanoate = acetaldehyde + pyruvate. In Albidiferax ferrireducens (strain ATCC BAA-621 / DSM 15236 / T118) (Rhodoferax ferrireducens), this protein is 4-hydroxy-2-oxovalerate aldolase.